Here is a 152-residue protein sequence, read N- to C-terminus: Glutaredoxin-related protein 5, mitochondrial (152 aa).

The transit peptide at 1–31 directs the protein to the mitochondrion; sequence MSASLSRAAAALLRWGRSAGGGGLPGAGVRA. The Glutaredoxin domain occupies 38 to 141; that stretch reads AEQLDALVKK…EELKKLGIRS (104 aa). Glutathione is bound at residue Lys55. Position 55 is an N6-succinyllysine (Lys55). Cys63 lines the [2Fe-2S] cluster pocket. Glutathione contacts are provided by residues 93-97, Ile105, and 118-119; these read RQGIK and CD. At Ser151 the chain carries Phosphoserine.

The protein belongs to the glutaredoxin family. Monothiol subfamily. Homodimer. Interacts with ISCU. Interacts with BOLA1. In terms of tissue distribution, detected in bone, liver, muscle and kidney.

It is found in the mitochondrion matrix. Monothiol glutaredoxin involved in mitochondrial iron-sulfur (Fe/S) cluster transfer. Receives 2Fe/2S clusters from scaffold protein ISCU and mediates their transfer to apoproteins, to the 4Fe/FS cluster biosynthesis machinery, or export from mitochondrion. Required for normal regulation of hemoglobin synthesis by the iron-sulfur protein ACO1. The polypeptide is Glutaredoxin-related protein 5, mitochondrial (Glrx5) (Mus musculus (Mouse)).